Consider the following 121-residue polypeptide: Glycine cleavage system H protein (121 aa).

The 83-residue stretch at 16 to 98 (VATIGITAHA…EAGGWFAKVR (83 aa)) folds into the Lipoyl-binding domain. At lysine 57 the chain carries N6-lipoyllysine.

Belongs to the GcvH family. As to quaternary structure, the glycine cleavage system is composed of four proteins: P, T, L and H. (R)-lipoate serves as cofactor.

Functionally, the glycine cleavage system catalyzes the degradation of glycine. The H protein shuttles the methylamine group of glycine from the P protein to the T protein. This chain is Glycine cleavage system H protein, found in Phenylobacterium zucineum (strain HLK1).